The primary structure comprises 266 residues: Vitamin B12-binding protein (266 aa).

A signal peptide spans 1–22 (MAKQMFRALGALLLTLPVWLYA). A Fe/B12 periplasmic-binding domain is found at 25–266 (RVITLSPANT…QLCNALSQVN (242 aa)). Residues Tyr-50 and 242–246 (DWFER) contribute to the cyanocob(III)alamin site. Residues Cys-183 and Cys-259 are joined by a disulfide bond.

Belongs to the BtuF family. The complex is composed of two ATP-binding proteins (BtuD), two transmembrane proteins (BtuC) and a solute-binding protein (BtuF).

It is found in the periplasm. In terms of biological role, part of the ABC transporter complex BtuCDF involved in vitamin B12 import. Binds vitamin B12 and delivers it to the periplasmic surface of BtuC. This Salmonella typhi protein is Vitamin B12-binding protein.